Reading from the N-terminus, the 255-residue chain is Small ribosomal subunit protein uS2 (255 aa).

The disordered stretch occupies residues 232–255; that stretch reads ASGRDLGASEEVPVEPALEEASEA.

It belongs to the universal ribosomal protein uS2 family.

This is Small ribosomal subunit protein uS2 from Sinorhizobium medicae (strain WSM419) (Ensifer medicae).